Here is a 171-residue protein sequence, read N- to C-terminus: 3-hydroxydecanoyl-[acyl-carrier-protein] dehydratase (171 aa).

Residue His70 is part of the active site.

This sequence belongs to the thioester dehydratase family. FabA subfamily. In terms of assembly, homodimer.

Its subcellular location is the cytoplasm. The catalysed reaction is a (3R)-hydroxyacyl-[ACP] = a (2E)-enoyl-[ACP] + H2O. The enzyme catalyses (3R)-hydroxydecanoyl-[ACP] = (2E)-decenoyl-[ACP] + H2O. It catalyses the reaction (2E)-decenoyl-[ACP] = (3Z)-decenoyl-[ACP]. It functions in the pathway lipid metabolism; fatty acid biosynthesis. In terms of biological role, necessary for the introduction of cis unsaturation into fatty acids. Catalyzes the dehydration of (3R)-3-hydroxydecanoyl-ACP to E-(2)-decenoyl-ACP and then its isomerization to Z-(3)-decenoyl-ACP. Can catalyze the dehydratase reaction for beta-hydroxyacyl-ACPs with saturated chain lengths up to 16:0, being most active on intermediate chain length. This Shewanella halifaxensis (strain HAW-EB4) protein is 3-hydroxydecanoyl-[acyl-carrier-protein] dehydratase.